Consider the following 429-residue polypeptide: MTAITNIAAREILDSRGNPTVEVDVLLEDGSFGRAAVPSGASTGAHEAVELRDGDKSRYNGKGVLKAVDAVQSEILDAIGGMDAEDQVAVDEAMIALDGTPNKARLGANAILGVSLAVAKAAAETAGLPLYRYVGGVQGRVLPVPMMNIVNGGAHADNPIDFQEFMVMPVGATSLSDAVRMGAEIFHTLKSALKKAGHNTNVGDEGGFAPNLPSAEAALDFVMESINAAGFKPGSDVVLALDCAATEFFKDGAYRYEGEGQTRSIEQQVDYLAKLTEAYPILSIEDGMSEDDWEGWKLLTDRIGSRVQLVGDDLFVTNVERLARGIETGTANSILVKVNQIGSLTETLAAVDMAQRAGYTAVMSHRSGETEDSTIADLAVATNCGQIKTGSLARSDRLAKYNQLIRIEEGLGAQALYAGRSAIRQLAGR.

Gln-163 contributes to the (2R)-2-phosphoglycerate binding site. The active-site Proton donor is Glu-205. Asp-242, Glu-285, and Asp-312 together coordinate Mg(2+). Positions 337, 366, 367, and 388 each coordinate (2R)-2-phosphoglycerate. The Proton acceptor role is filled by Lys-337.

Belongs to the enolase family. Requires Mg(2+) as cofactor.

It localises to the cytoplasm. Its subcellular location is the secreted. The protein resides in the cell surface. It catalyses the reaction (2R)-2-phosphoglycerate = phosphoenolpyruvate + H2O. It participates in carbohydrate degradation; glycolysis; pyruvate from D-glyceraldehyde 3-phosphate: step 4/5. In terms of biological role, catalyzes the reversible conversion of 2-phosphoglycerate (2-PG) into phosphoenolpyruvate (PEP). It is essential for the degradation of carbohydrates via glycolysis. In Methylorubrum extorquens (strain PA1) (Methylobacterium extorquens), this protein is Enolase.